The sequence spans 649 residues: Acetylcholinesterase (649 aa).

Residues 1–38 (MAISCRQSRVLPMSLPLPLTIPLPLVLVLSLHLSGVCG) form the signal peptide. Cys-104 and Cys-131 are oxidised to a cystine. Residues Asn-126 and Asn-174 are each glycosylated (N-linked (GlcNAc...) asparagine). The Acyl-ester intermediate role is filled by Ser-276. Cys-330 and Cys-345 are oxidised to a cystine. N-linked (GlcNAc...) asparagine glycosylation occurs at Asn-331. Residues Glu-405 and His-518 each act as charge relay system in the active site. Cys-480 and Cys-598 are disulfide-bonded. Asn-531 is a glycosylation site (N-linked (GlcNAc...) asparagine). Residue Ser-619 is the site of GPI-anchor amidated serine attachment. The propeptide at 620–649 (GSASISPRLQLLGIAALIYICAALRTKRVF) is removed in mature form.

It belongs to the type-B carboxylesterase/lipase family. Homodimer; disulfide-linked. The active unit is formed by non-covalent association of the 55 kDa and 16 kDa subunits. In terms of processing, proteolytic cleavage into the 16 kDa subunit and the 55 kDa subunits originates from the hydrophilic peptide, aa 148-180, and is associated with excretion out of the cell. Neither N-glycosylation nor dimerization is required for enzyme activity or substrate specificity, but protects the protein against proteolytic digestion.

It is found in the synapse. It localises to the cell membrane. The catalysed reaction is acetylcholine + H2O = choline + acetate + H(+). Functionally, rapidly hydrolyzes choline released into the synapse. It can hydrolyze butyrylthiocholine. The polypeptide is Acetylcholinesterase (Ace) (Drosophila melanogaster (Fruit fly)).